The sequence spans 127 residues: Large ribosomal subunit protein bL17 (127 aa).

The protein belongs to the bacterial ribosomal protein bL17 family. Part of the 50S ribosomal subunit. Contacts protein L32.

The sequence is that of Large ribosomal subunit protein bL17 from Leuconostoc citreum (strain KM20).